Here is a 116-residue protein sequence, read N- to C-terminus: Protein V2 (116 aa).

The protein belongs to the geminiviridae protein AV2/V2 family. As to quaternary structure, interacts with host SGS3.

It localises to the host cytoplasm. The protein localises to the host perinuclear region. Through its interaction with host SGS3, acts as a suppressor of RNA-mediated gene silencing, also known as post-transcriptional gene silencing (PTGS), a mechanism of plant viral defense that limits the accumulation of viral RNAs. In Tomato yellow leaf curl virus (strain Israel) (TYLCV), this protein is Protein V2.